The primary structure comprises 337 residues: Glyceraldehyde-3-phosphate dehydrogenase (337 aa).

NAD(+) contacts are provided by residues 12 to 13, aspartate 34, and lysine 79; that span reads RI. D-glyceraldehyde 3-phosphate-binding positions include 150–152, threonine 181, 210–211, and arginine 233; these read SCT and TG. Cysteine 151 functions as the Nucleophile in the catalytic mechanism. Position 315 (asparagine 315) interacts with NAD(+).

It belongs to the glyceraldehyde-3-phosphate dehydrogenase family. Homotetramer.

It is found in the cytoplasm. It carries out the reaction D-glyceraldehyde 3-phosphate + phosphate + NAD(+) = (2R)-3-phospho-glyceroyl phosphate + NADH + H(+). It functions in the pathway carbohydrate degradation; glycolysis; pyruvate from D-glyceraldehyde 3-phosphate: step 1/5. The protein is Glyceraldehyde-3-phosphate dehydrogenase (GPD1) of Phaeosphaeria nodorum (strain SN15 / ATCC MYA-4574 / FGSC 10173) (Glume blotch fungus).